Consider the following 616-residue polypeptide: UvrABC system protein C (616 aa).

The 79-residue stretch at 21–99 (HQPGVYRMYD…IKLYLPKYNV (79 aa)) folds into the GIY-YIG domain. The UVR domain maps to 209 to 244 (RQVIASLVEKMEQASQSLNFEQAATFRDQIQALRRV).

It belongs to the UvrC family. Interacts with UvrB in an incision complex.

It localises to the cytoplasm. The UvrABC repair system catalyzes the recognition and processing of DNA lesions. UvrC both incises the 5' and 3' sides of the lesion. The N-terminal half is responsible for the 3' incision and the C-terminal half is responsible for the 5' incision. The polypeptide is UvrABC system protein C (Photobacterium profundum (strain SS9)).